We begin with the raw amino-acid sequence, 261 residues long: Cytochrome c oxidase subunit 3 (261 aa).

Residues 1–15 (MTHQTHAYHMVNPSP) are Mitochondrial matrix-facing. Residues 16–34 (WPLTGALSALLMTSGLTMW) form a helical membrane-spanning segment. Residues 35–40 (FHFNSM) lie on the Mitochondrial intermembrane side of the membrane. A helical membrane pass occupies residues 41-66 (TLLTLGLTTNMLTMYQWWRDIIREST). Topologically, residues 67–72 (FQGHHT) are mitochondrial matrix. A helical transmembrane segment spans residues 73 to 105 (PNVQKGLRYGMILFIISEVLFFTGFFWAFYHSS). At 106–128 (LAPTPELGGCWPPTGIHPLNPLE) the chain is on the mitochondrial intermembrane side. A helical membrane pass occupies residues 129 to 152 (VPLLNTSVLLASGVSITWAHHSLM). Residues 153–155 (EGN) lie on the Mitochondrial matrix side of the membrane. The chain crosses the membrane as a helical span at residues 156–183 (RNHMLQALFITISLGVYFTLLQASEYYE). Residues 184–190 (APFTISD) lie on the Mitochondrial intermembrane side of the membrane. Residues 191-223 (GVYGSTFFVATGFHGLHVIIGSTFLIVCFFRQL) traverse the membrane as a helical segment. Topologically, residues 224 to 232 (KFHFTSNHH) are mitochondrial matrix. Residues 233–256 (FGFEAAAWYWHFVDVVWLFLYVSI) form a helical membrane-spanning segment. Residues 257–261 (YWWGS) lie on the Mitochondrial intermembrane side of the membrane.

Belongs to the cytochrome c oxidase subunit 3 family. In terms of assembly, component of the cytochrome c oxidase (complex IV, CIV), a multisubunit enzyme composed of 14 subunits. The complex is composed of a catalytic core of 3 subunits MT-CO1, MT-CO2 and MT-CO3, encoded in the mitochondrial DNA, and 11 supernumerary subunits COX4I, COX5A, COX5B, COX6A, COX6B, COX6C, COX7A, COX7B, COX7C, COX8 and NDUFA4, which are encoded in the nuclear genome. The complex exists as a monomer or a dimer and forms supercomplexes (SCs) in the inner mitochondrial membrane with NADH-ubiquinone oxidoreductase (complex I, CI) and ubiquinol-cytochrome c oxidoreductase (cytochrome b-c1 complex, complex III, CIII), resulting in different assemblies (supercomplex SCI(1)III(2)IV(1) and megacomplex MCI(2)III(2)IV(2)).

It is found in the mitochondrion inner membrane. The catalysed reaction is 4 Fe(II)-[cytochrome c] + O2 + 8 H(+)(in) = 4 Fe(III)-[cytochrome c] + 2 H2O + 4 H(+)(out). Its function is as follows. Component of the cytochrome c oxidase, the last enzyme in the mitochondrial electron transport chain which drives oxidative phosphorylation. The respiratory chain contains 3 multisubunit complexes succinate dehydrogenase (complex II, CII), ubiquinol-cytochrome c oxidoreductase (cytochrome b-c1 complex, complex III, CIII) and cytochrome c oxidase (complex IV, CIV), that cooperate to transfer electrons derived from NADH and succinate to molecular oxygen, creating an electrochemical gradient over the inner membrane that drives transmembrane transport and the ATP synthase. Cytochrome c oxidase is the component of the respiratory chain that catalyzes the reduction of oxygen to water. Electrons originating from reduced cytochrome c in the intermembrane space (IMS) are transferred via the dinuclear copper A center (CU(A)) of subunit 2 and heme A of subunit 1 to the active site in subunit 1, a binuclear center (BNC) formed by heme A3 and copper B (CU(B)). The BNC reduces molecular oxygen to 2 water molecules using 4 electrons from cytochrome c in the IMS and 4 protons from the mitochondrial matrix. The protein is Cytochrome c oxidase subunit 3 (MT-CO3) of Antidorcas marsupialis (Springbok).